The primary structure comprises 93 residues: Large ribosomal subunit protein uL23cz/uL23cy (93 aa).

The protein belongs to the universal ribosomal protein uL23 family. Part of the 50S ribosomal subunit.

It is found in the plastid. Its subcellular location is the chloroplast. Functionally, binds to 23S rRNA. This Oryza nivara (Indian wild rice) protein is Large ribosomal subunit protein uL23cz/uL23cy (rpl23-A).